A 409-amino-acid polypeptide reads, in one-letter code: MKTDGGNTWRASHSKPLNTANTMGEPFSHSEYSVHADQSEFYLNELTEHSGQDNPCMNTSRLNTNRYGHPVVHPCPKIHCICTQSNIAAIGSDCTGCVDIAQACKMLRGGLGCTQDPCVKNPHTQCFTDVSNHAMRNVLPLNVSNTEQFPIQIEYANGRNPVLNPMDDLAMRAALLLSKDIDLQNTHILPSTRISIEKNIPVAAGLAGGSADAAAVLLGINSAWQTNYSRCDLLGKAGALGADVPFLIWGGAAYGSGTGSCVTFFETQTLYWVLCFSKHPLSTRKVFQELDRQRSGAGCNHHPVFSNPAECAEMLKKAIKRGPEALAALLHNDLTSAAKMLMPEIAERIKAAERCPGILRAIISGSGPTLALLAEDAEAANRACSILKDTGVICKAVSSPAYSSIYWQT.

Positions 1-22 (MKTDGGNTWRASHSKPLNTANT) are enriched in polar residues. Positions 1–26 (MKTDGGNTWRASHSKPLNTANTMGEP) are disordered. 201–211 (PVAAGLAGGSA) lines the ATP pocket. The active site involves Asp243.

The protein belongs to the GHMP kinase family. IspE subfamily.

The enzyme catalyses 4-CDP-2-C-methyl-D-erythritol + ATP = 4-CDP-2-C-methyl-D-erythritol 2-phosphate + ADP + H(+). Its pathway is isoprenoid biosynthesis; isopentenyl diphosphate biosynthesis via DXP pathway; isopentenyl diphosphate from 1-deoxy-D-xylulose 5-phosphate: step 3/6. In terms of biological role, catalyzes the phosphorylation of the position 2 hydroxy group of 4-diphosphocytidyl-2C-methyl-D-erythritol. The protein is 4-diphosphocytidyl-2-C-methyl-D-erythritol kinase (ispE) of Tropheryma whipplei (strain Twist) (Whipple's bacillus).